The chain runs to 510 residues: Putative thymidine phosphorylase (510 aa).

This sequence belongs to the thymidine/pyrimidine-nucleoside phosphorylase family. Type 2 subfamily.

It catalyses the reaction thymidine + phosphate = 2-deoxy-alpha-D-ribose 1-phosphate + thymine. This chain is Putative thymidine phosphorylase, found in Nitrobacter hamburgensis (strain DSM 10229 / NCIMB 13809 / X14).